A 964-amino-acid chain; its full sequence is Translation initiation factor IF-2 (964 aa).

The disordered stretch occupies residues 26 to 375; the sequence is AAGVSKRSPE…QNNQHAFQAP (350 aa). 7 stretches are compositionally biased toward basic and acidic residues: residues 49–60, 91–103, 118–154, 174–206, 225–236, 243–252, and 328–339; these read YLKRSHGAREDS, VRPD…EAPK, AKPE…KPEP, IAAR…ERRQ, PQREERRDDRRG, RGPRGNDNRG, and KGGERSWDDNKK. The 170-residue stretch at 464 to 633 folds into the tr-type G domain; the sequence is PRSPVVTVMG…LLQAEVLELK (170 aa). The tract at residues 473-480 is G1; that stretch reads GHVDHGKT. 473–480 is a GTP binding site; that stretch reads GHVDHGKT. The segment at 498 to 502 is G2; that stretch reads GITQH. The tract at residues 519-522 is G3; sequence DTPG. GTP is bound by residues 519–523 and 573–576; these read DTPGH and NKID. The segment at 573 to 576 is G4; it reads NKID. The G5 stretch occupies residues 609-611; the sequence is SAK.

It belongs to the TRAFAC class translation factor GTPase superfamily. Classic translation factor GTPase family. IF-2 subfamily.

Its subcellular location is the cytoplasm. One of the essential components for the initiation of protein synthesis. Protects formylmethionyl-tRNA from spontaneous hydrolysis and promotes its binding to the 30S ribosomal subunits. Also involved in the hydrolysis of GTP during the formation of the 70S ribosomal complex. In Chromobacterium violaceum (strain ATCC 12472 / DSM 30191 / JCM 1249 / CCUG 213 / NBRC 12614 / NCIMB 9131 / NCTC 9757 / MK), this protein is Translation initiation factor IF-2.